The following is a 69-amino-acid chain: Small ribosomal subunit protein bS21 (69 aa).

This sequence belongs to the bacterial ribosomal protein bS21 family.

In Treponema pallidum (strain Nichols), this protein is Small ribosomal subunit protein bS21 (rpsU).